A 105-amino-acid chain; its full sequence is MDVLHRLAEILEQRKTEAPDKSYAASLYAKGLDTILKKIGEEATETVIAAKDGEPGKIVYEMADLWFHCCVLLAQQGLGPDDVLRELGRRFGMSGLEEKASRKLG.

It belongs to the PRA-PH family.

The protein localises to the cytoplasm. The enzyme catalyses 1-(5-phospho-beta-D-ribosyl)-ATP + H2O = 1-(5-phospho-beta-D-ribosyl)-5'-AMP + diphosphate + H(+). The protein operates within amino-acid biosynthesis; L-histidine biosynthesis; L-histidine from 5-phospho-alpha-D-ribose 1-diphosphate: step 2/9. This Methylococcus capsulatus (strain ATCC 33009 / NCIMB 11132 / Bath) protein is Phosphoribosyl-ATP pyrophosphatase.